Reading from the N-terminus, the 232-residue chain is MALLLCLVCLTAALAHGCLHCHSNFSKKFSFYRHHVNFKSWWVGDIPVSGALLTDWSDDTMKELHLAIPAKITREKLDQVATAVYQMMDQLYQGKMYFPGYFPNELRNIFREQVHLIQNAIIESRIDCQHRCGIFQYETISCNNCTDSHVACFGYNCESSAQWKSAVQGLLNYINNWHKQDTSMRPRSSAFSWPGTHRATPAFLVSPALRCLEPPHLANLTLEDAAECLKQH.

An N-terminal signal peptide occupies residues 1-15; that stretch reads MALLLCLVCLTAALA. Asparagine 24 and asparagine 219 each carry an N-linked (GlcNAc...) asparagine glycan.

The protein belongs to the Izumo family. Detected in sperm.

Its subcellular location is the secreted. This is Izumo sperm-egg fusion protein 4 (IZUMO4) from Homo sapiens (Human).